Reading from the N-terminus, the 715-residue chain is Protein MTSS 2 (715 aa).

One can recognise an IMD domain in the interval 1–249; that stretch reads METAEKECGA…EQVIKDLKGS (249 aa). The stretch at 134 to 156 forms a coiled coil; the sequence is HEIKKKSSDTLKLQKKARKGKGD. Low complexity-rich tracts occupy residues 253 to 274, 284 to 295, and 312 to 330; these read WSYQ…SMCS, SSVSSHDSGFVS, and TSQK…TCQS. 3 disordered regions span residues 253–405, 420–485, and 527–562; these read WSYQ…EVSP, LEHQ…RNSN, and IRRT…PTVP. T257 is subject to Phosphothreonine. S261 carries the post-translational modification Phosphoserine. Residues 331-341 are compositionally biased toward polar residues; sequence VSECSSPTSDW. Positions 360-369 are enriched in basic and acidic residues; it reads DRVEHLRDTE. S404 is modified (phosphoserine). The span at 429–442 shows a compositional bias: low complexity; it reads SLQYSSGYSTQTTT. A compositionally biased stretch (polar residues) spans 443-455; it reads PSCSEDTIPSQGS. S542, S564, S575, S587, S597, and S602 each carry phosphoserine. Phosphothreonine is present on T606. The interval 661–690 is disordered; it reads FPFPTALSATPSEETPTPPPAATSDPPAED. Positions 687-704 constitute a WH2 domain; that stretch reads PAEDMLVAIRRGVRLRRT.

Belongs to the MTSS family. In terms of assembly, interacts (via IMD domain) with RAC1; this interaction may be important to potentiate PDGF-induced RAC1 activation.

Its subcellular location is the cytoplasm. The protein resides in the cell projection. The protein localises to the ruffle. Its function is as follows. Involved in plasma membrane dynamics. Potentiated PDGF-mediated formation of membrane ruffles and lamellipodia in fibroblasts, acting via RAC1 activation. May function in actin bundling. This chain is Protein MTSS 2 (Mtss2), found in Mus musculus (Mouse).